We begin with the raw amino-acid sequence, 345 residues long: Splicing factor YJU2 (345 aa).

Residues cysteine 43, cysteine 46, cysteine 80, and cysteine 83 each contribute to the Zn(2+) site. Residues 205-345 form a disordered region; sequence KRLRDSDSEE…YSDSDDSSSD (141 aa). Residues 217-232 show a composition bias toward basic and acidic residues; it reads ENAKERSKKHIADKPT. 2 stretches are compositionally biased toward low complexity: residues 308–317 and 327–337; these read SSITSSSASS and GSSLGLLGAYS.

This sequence belongs to the CWC16 family. YJU2 subfamily. Component of the spliceosome. Present in the activated B complex, the catalytically activated B* complex which catalyzes the branching, the catalytic step 1 C complex catalyzing the exon ligation, and the postcatalytic P complex containing the ligated exons (mRNA) and the excised lariat intron.

It localises to the nucleus. Its function is as follows. Part of the spliceosome which catalyzes two sequential transesterification reactions, first the excision of the non-coding intron from pre-mRNA and then the ligation of the coding exons to form the mature mRNA. Plays a role in stabilizing the structure of the spliceosome catalytic core and docking of the branch helix into the active site, producing 5'-exon and lariat intron-3'-intermediates. May protect cells from TP53-dependent apoptosis upon dsDNA break damage through association with PRP19-CD5L complex. The sequence is that of Splicing factor YJU2 from Danio rerio (Zebrafish).